A 304-amino-acid polypeptide reads, in one-letter code: Coenzyme PQQ synthesis protein B (304 aa).

This sequence belongs to the PqqB family.

It participates in cofactor biosynthesis; pyrroloquinoline quinone biosynthesis. In terms of biological role, may be involved in the transport of PQQ or its precursor to the periplasm. This is Coenzyme PQQ synthesis protein B from Pseudomonas aeruginosa (strain UCBPP-PA14).